The following is a 1515-amino-acid chain: Neurite extension and migration factor (1515 aa).

The segment covering Asp381 to Glu405 has biased composition (basic and acidic residues). Disordered stretches follow at residues Asp381–Gly415, Val505–Arg529, Lys731–Glu774, Phe1158–Gly1225, Thr1372–Arg1422, and Thr1435–Thr1479. 2 stretches are compositionally biased toward polar residues: residues Ser746–Asn757 and Thr763–Met772. Over residues Pro1180–Lys1193 the composition is skewed to low complexity. The span at Thr1442–Ser1452 shows a compositional bias: basic residues. The segment covering Gly1455–Thr1479 has biased composition (basic and acidic residues).

As to expression, expressed in the brain, particularly during the late embryonic and perinatal stages of development. In the developing brain, it is expressed only in the cortical plate and subplate region but not in the intermediate or ventricular zone.

Its subcellular location is the nucleus. It localises to the cytoplasm. In terms of biological role, involved in neurite outgrowth by regulating cell-cell adhesion via the N-cadherin signaling pathway. May act by regulating expression of protein-coding genes, such as N-cadherins and integrin beta-1 (ITGB1). This chain is Neurite extension and migration factor, found in Mus musculus (Mouse).